Reading from the N-terminus, the 606-residue chain is (R)-limonene synthase 1, chloroplastic (606 aa).

The transit peptide at 1-32 (MSSCINPSTLVTSVNAFKCLPLATNKAAIRIM) directs the protein to the chloroplast. Positions 342 and 346 each coordinate Mn(2+). Residues Asp342, Asp346, Arg484, Asp487, and Lys503 each coordinate substrate. The DDXXD motif motif lies at 342–346 (DDIYD). A Mn(2+)-binding site is contributed by Asp487.

It belongs to the terpene synthase family. Requires Mg(2+) as cofactor. The cofactor is Mn(2+).

The protein localises to the plastid. It localises to the chloroplast. It carries out the reaction (2E)-geranyl diphosphate = (4R)-limonene + diphosphate. This is (R)-limonene synthase 1, chloroplastic from Citrus limon (Lemon).